A 365-amino-acid chain; its full sequence is Chorismate synthase (365 aa).

R46 contributes to the NADP(+) binding site. Residues 123 to 125 (RSS), 241 to 242 (NG), G281, 296 to 300 (KPTPS), and R322 each bind FMN.

Belongs to the chorismate synthase family. As to quaternary structure, homotetramer. Requires FMNH2 as cofactor.

It catalyses the reaction 5-O-(1-carboxyvinyl)-3-phosphoshikimate = chorismate + phosphate. It participates in metabolic intermediate biosynthesis; chorismate biosynthesis; chorismate from D-erythrose 4-phosphate and phosphoenolpyruvate: step 7/7. In terms of biological role, catalyzes the anti-1,4-elimination of the C-3 phosphate and the C-6 proR hydrogen from 5-enolpyruvylshikimate-3-phosphate (EPSP) to yield chorismate, which is the branch point compound that serves as the starting substrate for the three terminal pathways of aromatic amino acid biosynthesis. This reaction introduces a second double bond into the aromatic ring system. This is Chorismate synthase from Helicobacter pylori (strain HPAG1).